The chain runs to 305 residues: Orotidine 5'-phosphate decarboxylase (305 aa).

The active-site Proton donor is K108.

The protein belongs to the OMP decarboxylase family. Type 2 subfamily.

It catalyses the reaction orotidine 5'-phosphate + H(+) = UMP + CO2. It functions in the pathway pyrimidine metabolism; UMP biosynthesis via de novo pathway; UMP from orotate: step 2/2. The polypeptide is Orotidine 5'-phosphate decarboxylase (Caldicellulosiruptor bescii (strain ATCC BAA-1888 / DSM 6725 / KCTC 15123 / Z-1320) (Anaerocellum thermophilum)).